The chain runs to 489 residues: Ribonuclease G (489 aa).

The region spanning 39-128 is the S1 motif domain; the sequence is GNIYKGRVSR…LTTDITLPSR (90 aa). Positions 304 and 347 each coordinate Mg(2+).

It belongs to the RNase E/G family. RNase G subfamily. As to quaternary structure, homodimer, in equilibrium with possible higher multimers. Mg(2+) serves as cofactor.

It is found in the cytoplasm. Its function is as follows. An endonuclease that acts in the processing of the 5'-end of 16S rRNA and 23S rRNA. It prefers 5'-monophosphorylated substrates and cleaves single-stranded sites rich in A and U residues; contributes to tRNA processing and mRNA turnover. This Escherichia coli O157:H7 protein is Ribonuclease G (rng).